The primary structure comprises 469 residues: C4b-binding protein (469 aa).

A signal peptide spans M1–G56. Sushi domains lie at K57–K117, K118–I178, V179–K242, I243–F301, D302–A357, and L358–Q415. Disulfide bonds link C58/C103, C88/C115, C120/C160, C146/C176, C181/C223, C209/C240, C245/C287, C273/C299, C303/C343, C329/C355, C359/C400, and C386/C413. The N-linked (GlcNAc...) asparagine glycan is linked to N74. N-linked (GlcNAc...) asparagine glycans are attached at residues N227, N275, and N292. N366 and N381 each carry an N-linked (GlcNAc...) asparagine glycan. N428 carries an N-linked (GlcNAc...) asparagine glycan.

In terms of assembly, homoheptamer; not covalently linked. Mouse lacks the beta chain of C4BP.

Its subcellular location is the secreted. Its function is as follows. Controls the classical pathway of complement activation. It binds as a cofactor to C3b/C4b inactivator (C3bINA), which then hydrolyzes the complement fragment C4b. It also accelerates the degradation of the C4bC2a complex (C3 convertase) by dissociating the complement fragment C2a. Alpha chain binds C4b. It also interacts with serum amyloid P component. The chain is C4b-binding protein (C4bpa) from Mus musculus (Mouse).